The chain runs to 2357 residues: Protein transport protein Sec16A (2357 aa).

Disordered regions lie at residues 1–25 (MQPP…RSVF) and 57–303 (FSRQ…STFR). Low complexity-rich tracts occupy residues 64–76 (STPL…SSPP) and 210–227 (QMPG…PSGQ). Residues 285–303 (HLQSGSHLANNSDPESTFR) show a composition bias toward polar residues. Phosphoserine is present on residues S296, S314, and S331. Disordered stretches follow at residues 335 to 359 (NPLA…GSGC), 508 to 540 (APDA…ARPQ), 553 to 603 (KPED…TGIF), 758 to 828 (VQPP…NPPV), 924 to 987 (LLVQ…SSHQ), 1006 to 1038 (VNVY…PNLD), and 1059 to 1151 (QELV…APGP). The segment covering 520–536 (SVSSSYSSRSHGRLSGS) has biased composition (low complexity). 5 positions are modified to phosphoserine: S559, S569, S587, S589, and S592. T593 is modified (phosphothreonine). Phosphoserine is present on S595. Composition is skewed to polar residues over residues 766-778 (SGQQ…SAAP) and 803-825 (LQSQ…SLQN). Residues 1006–1028 (VNVYNPSHSDSLASQQSVASHPR) are compositionally biased toward polar residues. The tract at residues 1019 to 1890 (SQQSVASHPR…QQVERQIKEG (872 aa)) is required for localization to endoplasmic reticulum exit sites. Phosphoserine is present on S1069. The segment covering 1080–1101 (ELSNPESLPAQGQAQNSAQSPA) has biased composition (polar residues). The segment at 1101-1400 (ASLVLVDAGQ…EAPLPPGSFH (300 aa)) is interaction with MIA3. Residues 1102–1405 (SLVLVDAGQQ…PGSFHGDFAY (304 aa)) are required for endoplasmic reticulum localization. Residues 1118-1131 (QSSSVSLVSSGSGQ) show a composition bias toward low complexity. Pro residues predominate over residues 1138 to 1151 (QPWPQPVPALAPGP). Phosphoserine occurs at positions 1207, 1229, and 1305. Positions 1215–1248 (YPEPERPSSRASHSSERPPPRQGYPEGYYSSKSG) are disordered. Basic and acidic residues predominate over residues 1216-1233 (PEPERPSSRASHSSERPP). Residues 1307-1322 (FGDRPEKRDNNWRYDP) are compositionally biased toward basic and acidic residues. The interval 1307–1378 (FGDRPEKRDN…SLSSHSHQSQ (72 aa)) is disordered. T1325 is subject to Phosphothreonine. 9 positions are modified to phosphoserine: S1327, S1347, S1350, S1356, S1359, S1362, S1369, S1573, and S1601. Residues 1333-1354 (DPHRDPYGEEVDRRSVHSEHSA) show a composition bias toward basic and acidic residues. A compositionally biased stretch (low complexity) spans 1356–1375 (SLHSAHSLASRRSSLSSHSH). The central conserved domain (CCD); mediates interaction with RNF183, LRRK2 and SEC13 stretch occupies residues 1434–1890 (QVSSRPTSPE…QQVERQIKEG (457 aa)). T1907 carries the phosphothreonine modification. Phosphoserine is present on residues S1939, S1964, S2022, and S2042. Disordered regions lie at residues 2049–2110 (KFAN…SWFF), 2141–2181 (VNLN…PVNM), and 2226–2328 (NLFV…MPFY). T2054 is subject to Phosphothreonine. S2056, S2073, and S2083 each carry phosphoserine. The segment covering 2087 to 2106 (ETKRPGQAAKKETKEPKKGE) has biased composition (basic and acidic residues). The segment at 2106-2357 (ESWFFRWLPG…IGQRKHLVLN (252 aa)) is required for interaction with SEC23A. Phosphoserine occurs at positions 2271 and 2291. 2 stretches are compositionally biased toward low complexity: residues 2289–2302 (ELSR…LSRE) and 2310–2324 (APGD…PSGA).

It belongs to the SEC16 family. SEC16A and SEC16B are each present in multiple copies in a heteromeric complex. Interacts with SEC23A. Interacts with RNF183 and RNF152. Interacts with LRRK2 (via ROC domain). Interacts with SEC13. Interacts with RAB10. Interacts with MIA3. Interacts with GORASP2 in response to ER stress. As to expression, ubiquitous. Expressed at higher levels in the pancreas.

It is found in the endoplasmic reticulum membrane. Its subcellular location is the golgi apparatus membrane. The protein resides in the cytoplasm. It localises to the perinuclear region. The protein localises to the cytosol. It is found in the microsome membrane. Functionally, acts as a molecular scaffold that plays a key role in the organization of the endoplasmic reticulum exit sites (ERES), also known as transitional endoplasmic reticulum (tER). SAR1A-GTP-dependent assembly of SEC16A on the ER membrane forms an organized scaffold defining an ERES. Required for secretory cargo traffic from the endoplasmic reticulum to the Golgi apparatus. Mediates the recruitment of MIA3/TANGO to ERES. Regulates both conventional (ER/Golgi-dependent) and GORASP2-mediated unconventional (ER/Golgi-independent) trafficking of CFTR to cell membrane. Positively regulates the protein stability of E3 ubiquitin-protein ligases RNF152 and RNF183 and the ER localization of RNF183. Acts as a RAB10 effector in the regulation of insulin-induced SLC2A4/GLUT4 glucose transporter-enriched vesicles delivery to the cell membrane in adipocytes. In Homo sapiens (Human), this protein is Protein transport protein Sec16A (SEC16A).